Consider the following 63-residue polypeptide: Large ribosomal subunit protein bL32 (63 aa).

Residues 1–16 show a composition bias toward basic residues; sequence MAVPKRKTSRMKRGFR. Positions 1-22 are disordered; the sequence is MAVPKRKTSRMKRGFRRSADAI.

The protein belongs to the bacterial ribosomal protein bL32 family.

The polypeptide is Large ribosomal subunit protein bL32 (Beijerinckia indica subsp. indica (strain ATCC 9039 / DSM 1715 / NCIMB 8712)).